A 446-amino-acid chain; its full sequence is UDP-N-acetylmuramoylalanine--D-glutamate ligase (446 aa).

An ATP-binding site is contributed by 112–118 (GTNGKST).

This sequence belongs to the MurCDEF family.

It localises to the cytoplasm. The catalysed reaction is UDP-N-acetyl-alpha-D-muramoyl-L-alanine + D-glutamate + ATP = UDP-N-acetyl-alpha-D-muramoyl-L-alanyl-D-glutamate + ADP + phosphate + H(+). The protein operates within cell wall biogenesis; peptidoglycan biosynthesis. Cell wall formation. Catalyzes the addition of glutamate to the nucleotide precursor UDP-N-acetylmuramoyl-L-alanine (UMA). This Baumannia cicadellinicola subsp. Homalodisca coagulata protein is UDP-N-acetylmuramoylalanine--D-glutamate ligase.